A 451-amino-acid polypeptide reads, in one-letter code: Glucose-6-phosphate isomerase (451 aa).

The active-site Proton donor is the Glu-291. Residues His-312 and Lys-426 contribute to the active site.

The protein belongs to the GPI family.

The protein localises to the cytoplasm. It carries out the reaction alpha-D-glucose 6-phosphate = beta-D-fructose 6-phosphate. It functions in the pathway carbohydrate biosynthesis; gluconeogenesis. It participates in carbohydrate degradation; glycolysis; D-glyceraldehyde 3-phosphate and glycerone phosphate from D-glucose: step 2/4. In terms of biological role, catalyzes the reversible isomerization of glucose-6-phosphate to fructose-6-phosphate. This is Glucose-6-phosphate isomerase from Caldanaerobacter subterraneus subsp. tengcongensis (strain DSM 15242 / JCM 11007 / NBRC 100824 / MB4) (Thermoanaerobacter tengcongensis).